The following is a 727-amino-acid chain: 1,4-alpha-glucan branching enzyme GlgB (727 aa).

D411 acts as the Nucleophile in catalysis. E464 functions as the Proton donor in the catalytic mechanism.

The protein belongs to the glycosyl hydrolase 13 family. GlgB subfamily. As to quaternary structure, monomer.

It carries out the reaction Transfers a segment of a (1-&gt;4)-alpha-D-glucan chain to a primary hydroxy group in a similar glucan chain.. It functions in the pathway glycan biosynthesis; glycogen biosynthesis. Functionally, catalyzes the formation of the alpha-1,6-glucosidic linkages in glycogen by scission of a 1,4-alpha-linked oligosaccharide from growing alpha-1,4-glucan chains and the subsequent attachment of the oligosaccharide to the alpha-1,6 position. The polypeptide is 1,4-alpha-glucan branching enzyme GlgB (Protochlamydia amoebophila (strain UWE25)).